The following is a 795-amino-acid chain: MKFNESWLREWVDPKVSTAQLCDQITMLGLEVDSVEPISGEFSGVVVAEVVECTQHPDADKLRVTKVNVGAERLLSIVCGAANCRQGLKVACAIEGAILPGNFKIKKTKLRGQLSEGMLCSFSELGIKEDQSSGIIELPADAPIGVDIREYLNLNDVAIEVSLTPNRADCLSIAGIAREVAVINQMEVKSPVIKPVPATLSAPIEIDIQAPSACPHYLARIIKNVNVNATSPLWLQEKLRRCGILSIDPIVDITNLSLLELGQPMHAFDAEKVKAPIQVRLAKDQEQLVLLDGTTAKLQTNTLVIADQKNVLALAGIMGGEASKVNAETKDIILEAAFFAPLALTGRTRQYGLHTDASHRFERGVDPTLARQAMERATTLIIEICGGEVAEVCEAINTEYLPKQPIIRLRRTKLDSVIGHYIEDRLVTDILVRLGLNVTCENDGWIATVPSWRFDLEIEEDLIEEIARIYGYNRIPNNALLAHLTLKGSAEKVLEPNRIKTVLVDNDYQEVVTYSFVDPKIQQLLHPQQEALILPNPISSEMSAMRVSLLTGLLQTVLYNQNRQQNRIRIFEQGLRFIPDASAESAVRQEAVFAAVIVGEKHIANWEGKSKAVDFFDLKGDLEQILALTANKELTFVAKQFPALHPGQSAAIMLNEQEVGFIGTLHPSIGQKLGIKGTPIVFELLADVVSERAIPVAKEISKFPANNRDIAIVIDEHIPAREVLSACYHAGREQLTAVNLFDVYQGANLVVGKKSLAISLTIQNTEKTLTEEEISAVIQLVLDELAQRFQASLRD.

Positions 39–149 (SGEFSGVVVA…ADAPIGVDIR (111 aa)) constitute a tRNA-binding domain. The region spanning 402-477 (PKQPIIRLRR…RIYGYNRIPN (76 aa)) is the B5 domain. Residues Asp-455, Asp-461, Glu-464, and Glu-465 each contribute to the Mg(2+) site. The FDX-ACB domain occupies 701–794 (SKFPANNRDI…LAQRFQASLR (94 aa)).

This sequence belongs to the phenylalanyl-tRNA synthetase beta subunit family. Type 1 subfamily. In terms of assembly, tetramer of two alpha and two beta subunits. Mg(2+) serves as cofactor.

It localises to the cytoplasm. The catalysed reaction is tRNA(Phe) + L-phenylalanine + ATP = L-phenylalanyl-tRNA(Phe) + AMP + diphosphate + H(+). The sequence is that of Phenylalanine--tRNA ligase beta subunit from Haemophilus ducreyi (strain 35000HP / ATCC 700724).